Consider the following 265-residue polypeptide: Ribosomal RNA small subunit methyltransferase A (265 aa).

The S-adenosyl-L-methionine site is built by histidine 11, leucine 13, glycine 38, glutamate 59, aspartate 83, and asparagine 100.

This sequence belongs to the class I-like SAM-binding methyltransferase superfamily. rRNA adenine N(6)-methyltransferase family. RsmA subfamily.

It is found in the cytoplasm. The enzyme catalyses adenosine(1518)/adenosine(1519) in 16S rRNA + 4 S-adenosyl-L-methionine = N(6)-dimethyladenosine(1518)/N(6)-dimethyladenosine(1519) in 16S rRNA + 4 S-adenosyl-L-homocysteine + 4 H(+). Specifically dimethylates two adjacent adenosines (A1518 and A1519) in the loop of a conserved hairpin near the 3'-end of 16S rRNA in the 30S particle. May play a critical role in biogenesis of 30S subunits. This is Ribosomal RNA small subunit methyltransferase A from Thermosynechococcus vestitus (strain NIES-2133 / IAM M-273 / BP-1).